The sequence spans 371 residues: Geranylgeranyl transferase type-2 subunit alpha (371 aa).

PFTA repeat units lie at residues 45-79 (YSDEALIKTNELLIINPEFYTIWNYRREILINNYS), 92-126 (ILNQDLNFVLVQLKKFPKCYWIWNHRRWLLFELVK), 131-165 (NWKYEFGVVSKLLDLDQRNFHGWHYRRFVVKNMEL), 177-211 (INLDEFNYTTLKIQKDFSNFSAWHNRTKLIPKIYN), and 242-276 (LLKNDLEMIKTGVYMSPEDTSVWLYLYWLLTDDLF).

Belongs to the protein prenyltransferase subunit alpha family. In terms of assembly, heterodimer of an alpha and a beta subunit.

It carries out the reaction geranylgeranyl diphosphate + L-cysteinyl-[protein] = S-geranylgeranyl-L-cysteinyl-[protein] + diphosphate. Catalyzes the transfer of a geranyl-geranyl moiety from geranyl-geranyl pyrophosphate to proteins having the C-terminal -XCC or -XCXC, where both cysteines may become modified. Acts on YPT1 and SEC4. This chain is Geranylgeranyl transferase type-2 subunit alpha (BET4), found in Candida albicans (Yeast).